A 387-amino-acid chain; its full sequence is Patatin-05 (387 aa).

The N-terminal stretch at 1 to 23 is a signal peptide; that stretch reads MATTKSVLVLIFMILATTSSTFA. Residues 32 to 230 form the PNPLA domain; that stretch reads LSIDGGGIKG…TVADPALLSV (199 aa). The short motif at 36–41 is the GXGXXG element; sequence GGGIKG. A GXSXG motif is present at residues 75-79; it reads GTSTG. Residue Ser77 is the Nucleophile of the active site. N-linked (GlcNAc...) asparagine glycosylation is found at Asn115 and Asn203. The active-site Proton acceptor is the Asp216. The DGA/G motif lies at 216–218; the sequence is DGA.

Belongs to the patatin family. As to expression, tuber.

It localises to the vacuole. Functionally, probable lipolytic acyl hydrolase (LAH), an activity which is thought to be involved in the response of tubers to pathogens. This chain is Patatin-05 (pat1-k1), found in Solanum tuberosum (Potato).